The chain runs to 487 residues: Keratin, type I cytoskeletal 12 (487 aa).

Residues 1-118 (MSLSVCTSAL…GNDGGLLSGS (118 aa)) form a head region. Positions 119 to 154 (EKETMQNLNDRLASYLGKVRSLEEANAELENKIREW) are coil 1A. The 315-residue stretch at 119 to 433 (EKETMQNLND…RLLEGDSQGD (315 aa)) folds into the IF rod domain. Residues 158 to 175 (RRTRDAGSQSDYSKYYPL) are linker 1. A coil 1B region spans residues 176–267 (IEDLKNKIVS…KNHEEELQSF (92 aa)). A linker 12 region spans residues 268 to 290 (QAGGPGEVNVEMDAAPGVDLTKV). Residues 291–428 (LNEMRAQYEA…IETYRRLLEG (138 aa)) form a coil 2 region. Residues 428 to 461 (GDSQGDGFDESSSLSVSKPQTPSVDSSKDPNKTR) form a disordered region. Positions 429-487 (DSQGDGFDESSSLSVSKPQTPSVDSSKDPNKTRKIKTVVQEIVNGEVVSSQVQELEEEM) are tail. Residues 437–452 (ESSSLSVSKPQTPSVD) are compositionally biased toward polar residues.

This sequence belongs to the intermediate filament family. Heterotetramer of two type I and two type II keratins. Keratin-3 associates with keratin-12. In terms of tissue distribution, expressed in the corneal epithelium (at protein level). Also expressed in the suprabasal limbal epithelium of the cornea (at protein level).

In terms of biological role, involved in corneal epithelium organization, integrity and corneal keratin expression. This Mus musculus (Mouse) protein is Keratin, type I cytoskeletal 12 (Krt12).